We begin with the raw amino-acid sequence, 459 residues long: MSWSILTLLRDNPELLKEHVKKRFMDPSLVDEAYKLDLEWRRLLSQVQELRHRHNVISRDISKLPEPERSARINEARELLSQMEELEKKLKEIEDLREEALLKLPNIVHETVPVGPDDTYNVPIRFWGKPKVWSGYIEQFMQQTERYGFKVEYELVNWKPVGHADMLEYVLRLGDTVKAGEVAGSRFYYLFDDIVFLDIALLMYAIDSLTSKGYKLVLPPYMLRHKVMSGVIDLATFKDAIYKIEGEDLYLIATAEHSLAALHAFEEIPEEELPLKYVGVSPCFRKEAGAGNRDLKGIFRVHQFHKVEQYVYAKPEESWALMEELIGNAEDLFKGLELPYRVVNIASGDLGAPAAKKYDLETWMPAQGLFREMVSCSNTTDWQSYRLKTRLVRRKGMVKEYVHTLNSTAIASTRTITSILENRQNEDGTVTVPRVLRKYLEVFNKAPRDYIHPVKRERA.

254–256 (TAE) lines the L-serine pocket. ATP-binding positions include 285 to 287 (RKE) and Val-301. Glu-308 serves as a coordination point for L-serine. 372-375 (EMVS) contacts ATP. An L-serine-binding site is contributed by Thr-408.

It belongs to the class-II aminoacyl-tRNA synthetase family. Type-1 seryl-tRNA synthetase subfamily. Homodimer. The tRNA molecule binds across the dimer.

The protein localises to the cytoplasm. The enzyme catalyses tRNA(Ser) + L-serine + ATP = L-seryl-tRNA(Ser) + AMP + diphosphate + H(+). The catalysed reaction is tRNA(Sec) + L-serine + ATP = L-seryl-tRNA(Sec) + AMP + diphosphate + H(+). The protein operates within aminoacyl-tRNA biosynthesis; selenocysteinyl-tRNA(Sec) biosynthesis; L-seryl-tRNA(Sec) from L-serine and tRNA(Sec): step 1/1. Its function is as follows. Catalyzes the attachment of serine to tRNA(Ser). Is also able to aminoacylate tRNA(Sec) with serine, to form the misacylated tRNA L-seryl-tRNA(Sec), which will be further converted into selenocysteinyl-tRNA(Sec). This Desulfurococcus amylolyticus (strain DSM 18924 / JCM 16383 / VKM B-2413 / 1221n) (Desulfurococcus kamchatkensis) protein is Serine--tRNA ligase.